The chain runs to 226 residues: MGNTSDDDKILSYEDVVLRRSDLDILNGPIFLNDRVIEFYLSFLSTVHSSTTISLIPPSIAFWISNCPDTEYLKDFMKPLNLRDKDLLILPVNDNSNVEVAEGGLHWSLLVYYKEANTFVHHDSYMGVNRWSAKQLFKAVSPFVSNGDASYKECTDTPQQKNGYDCGVFLLATARVICEWFSSGGMKNRDELWFANVKETVPDLVNHLREEILALIKKLMSESVSK.

The protein belongs to the peptidase C48 family.

Functionally, processes the pre-form of the ubiquitin-like protein NEDD8/RUB1. Has the capacity to discriminate between NEDD8/RUB1 and ubiquitin. Has no SUMO protease activity. In Arabidopsis thaliana (Mouse-ear cress), this protein is NEDD8-specific protease 1 (NEDP1).